The following is a 127-amino-acid chain: Protein ApaG (127 aa).

An ApaG domain is found at 3–127; that stretch reads NERKYSIKVE…FILSVPRVLH (125 aa).

This Nitrosomonas europaea (strain ATCC 19718 / CIP 103999 / KCTC 2705 / NBRC 14298) protein is Protein ApaG.